The primary structure comprises 88 residues: uncharacterized protein (88 aa).

This is an uncharacterized protein from Gracula (BFDV).